The primary structure comprises 600 residues: Elongation factor 4 (600 aa).

One can recognise a tr-type G domain in the interval 5-187 (KYIRNFSIIA…AIVNKLPPPK (183 aa)). Residues 17–22 (DHGKST) and 134–137 (NKLD) each bind GTP.

The protein belongs to the TRAFAC class translation factor GTPase superfamily. Classic translation factor GTPase family. LepA subfamily.

It is found in the cell inner membrane. The enzyme catalyses GTP + H2O = GDP + phosphate + H(+). In terms of biological role, required for accurate and efficient protein synthesis under certain stress conditions. May act as a fidelity factor of the translation reaction, by catalyzing a one-codon backward translocation of tRNAs on improperly translocated ribosomes. Back-translocation proceeds from a post-translocation (POST) complex to a pre-translocation (PRE) complex, thus giving elongation factor G a second chance to translocate the tRNAs correctly. Binds to ribosomes in a GTP-dependent manner. In Rickettsia africae (strain ESF-5), this protein is Elongation factor 4.